The sequence spans 103 residues: Small ribosomal subunit protein uS10 (103 aa).

Belongs to the universal ribosomal protein uS10 family. In terms of assembly, part of the 30S ribosomal subunit.

Functionally, involved in the binding of tRNA to the ribosomes. This Helicobacter hepaticus (strain ATCC 51449 / 3B1) protein is Small ribosomal subunit protein uS10.